The following is a 344-amino-acid chain: Heat-inducible transcription repressor HrcA (344 aa).

It belongs to the HrcA family.

Negative regulator of class I heat shock genes (grpE-dnaK-dnaJ and groELS operons). Prevents heat-shock induction of these operons. In Moorella thermoacetica (strain ATCC 39073 / JCM 9320), this protein is Heat-inducible transcription repressor HrcA.